The primary structure comprises 415 residues: Extracellular signal-regulated kinase 1 (415 aa).

Residues 66-369 (YQILEIVGEG…VEDALKHPYL (304 aa)) enclose the Protein kinase domain. ATP-binding positions include 72 to 80 (VGEGAYGIV) and K95. Residue D190 is the Proton acceptor of the active site. The residue at position 226 (T226) is a Phosphothreonine. The TXY signature appears at 226–228 (TEY). Y228 carries the post-translational modification Phosphotyrosine.

This sequence belongs to the protein kinase superfamily. CMGC Ser/Thr protein kinase family. MAP kinase subfamily. It depends on Mg(2+) as a cofactor. Dually phosphorylated on Thr-226 and Tyr-228, which activates the enzyme.

The catalysed reaction is L-seryl-[protein] + ATP = O-phospho-L-seryl-[protein] + ADP + H(+). The enzyme catalyses L-threonyl-[protein] + ATP = O-phospho-L-threonyl-[protein] + ADP + H(+). Activated by tyrosine and threonine phosphorylation. The chain is Extracellular signal-regulated kinase 1 (CEK1) from Candida albicans (strain WO-1) (Yeast).